The sequence spans 570 residues: Repressible high-affinity phosphate permease (570 aa).

Topologically, residues 1–61 (MSTPQKTAGG…AVAGVGFFTD (61 aa)) are cytoplasmic. The helical transmembrane segment at 62–82 (SYDIFTVSLLTLMLGIVYFPG) threads the bilayer. Residues 83-95 (EGKMPTTSDTAIK) are Extracellular-facing. Residues 96–116 (LATSAGTVIGQVGFGAAADVF) traverse the membrane as a helical segment. The Cytoplasmic portion of the chain corresponds to 117–120 (GRKS). Residues 121–141 (MYGLELLFIIFATLAQALASG) traverse the membrane as a helical segment. The Extracellular portion of the chain corresponds to 142 to 143 (SP). The chain crosses the membrane as a helical span at residues 144 to 164 (SINIIGIIIFWRVLMGVGIGG). Residues 165 to 186 (DYPLSSIITSEFATTKWRGAMM) lie on the Cytoplasmic side of the membrane. A helical membrane pass occupies residues 187–207 (GAVFAMQGLGQLAAAFVMLFV). Residues 208 to 237 (TLGFKKSLEAAPTLASCTGDCAVAVDKMWR) lie on the Extracellular side of the membrane. A helical transmembrane segment spans residues 238–258 (TVIGVGAVPGCIALYYRLTIP). The Cytoplasmic segment spans residues 259 to 325 (ETPRYTFDVK…FFRHYSKRKN (67 aa)). A helical transmembrane segment spans residues 326-346 (AMLLAGTALSWCFLDIAYYGV). The Extracellular portion of the chain corresponds to 347–374 (SLNNATILNVIGYSTTGAKNTYEILYNT). A helical membrane pass occupies residues 375-395 (AVGNLIIVLAGAVPGYWVTVF). Residues 396–403 (TVDTVGRK) are Cytoplasmic-facing. The chain crosses the membrane as a helical span at residues 404–424 (PIQFMGFGILTILFVVMGFAY). The Extracellular portion of the chain corresponds to 425-433 (KHLSPHALL). Residues 434 to 454 (AIFVLAQFFFNFGPNATTFIV) traverse the membrane as a helical segment. Over 455-468 (PGEVFPTRYRSTSH) the chain is Cytoplasmic. A helical transmembrane segment spans residues 469–489 (GLSAAMGKIGSIIGQGAIAPL). Residues 490 to 505 (RTRGAVKGGNPNPWMN) lie on the Extracellular side of the membrane. The helical transmembrane segment at 506–526 (HVLEIYALFMLLGVGTTFLIP) threads the bilayer. Over 527-570 (ETKRKTLEELSGEFDMSGEEEAQRDTTLTEHKTEAPTSSAAVNA) the chain is Cytoplasmic. Acidic residues predominate over residues 537 to 546 (SGEFDMSGEE). Residues 537–570 (SGEFDMSGEEEAQRDTTLTEHKTEAPTSSAAVNA) are disordered. Positions 547 to 560 (EAQRDTTLTEHKTE) are enriched in basic and acidic residues. The segment covering 561–570 (APTSSAAVNA) has biased composition (polar residues).

It belongs to the major facilitator superfamily. Sugar transporter (TC 2.A.1.1) family.

The protein localises to the cell membrane. Its activity is regulated as follows. Phosphate transport activity is competitively inhibited by arsenate. High-affinity transporter for external inorganic phosphate. Acts probably as a H(+)-phosphate symporter. This is Repressible high-affinity phosphate permease from Neurospora crassa (strain ATCC 24698 / 74-OR23-1A / CBS 708.71 / DSM 1257 / FGSC 987).